Consider the following 862-residue polypeptide: MMKQFLDLKAKHPDAVMLFRCGDFYETYSTDAIIAAEILGITLTKRANGKGKTVEMAGFPHHALDTYLPKLIRAGKRVAICDQLEDPKTTKKLVKRGITELVTPGVSINDNVLNYKENNFLAAVHFGKSACGIAFLDISTGEFLTAEGPFDYVDKLLNNFAPKEILFERGKRGMFEGNFGSKFFTFELDDWVFTESSSREKLLKHFETKNLKGFGVEHLKNGIIASGAILQYLDMTEHTQVGHITSLARIEEDKYVRLDKFTVRSLELIGSMNDGGSSLLHVIDKTISPMGARLLKRWMVFPLKDEKPINDRLNVVEYFFRKPDFRELIEDELHRIGDLERIISKVAVGRVSPREVVQLKVALQAIEPIKEACQQADNPSLNRIGEQLNLCISIRDRIEKEINNDPPLLINKGGVIKDGVDTELDELRQIAYSGKDYLLKIQQRESELTGIPSLKIAYNSVFGYYIEVRNVHKDKVPQEWIRKQTLVNAERYITQELKEYEEKILGAEDKILVLETRLYTELVQALSEFIPAIQINANQIARIDCLLSFANVAKENNYIRPVIEDNDVLDIRQGRHPVIEKQLPIGEKYIANDVLLDNATQQVIIITGPNMAGKSALLRQTALITLLAQIGSFVPAESAHIGLVDKIFTRVGASDNISVGESTFMVEMNEASDILNNISSRSLVLFDELGRGTSTYDGISIAWAIVEYIHEHPKAKARTLFATHYHELNEMEKSFKRIKNYNVSVKEVDNKVIFLRKLERGGSEHSFGIHVAKMAGMPKSIVKRANEILKQLESDNRQQGISGKPLAEVSENRGGMQLSFFQLDDPILCQIRDEILHLDVNNLTPIEALNKLNDIKKIVRGK.

Gly608–Ser615 serves as a coordination point for ATP.

This sequence belongs to the DNA mismatch repair MutS family.

Its function is as follows. This protein is involved in the repair of mismatches in DNA. It is possible that it carries out the mismatch recognition step. This protein has a weak ATPase activity. This is DNA mismatch repair protein MutS from Bacteroides fragilis (strain YCH46).